Here is a 130-residue protein sequence, read N- to C-terminus: Small ribosomal subunit protein uS8 (130 aa).

Belongs to the universal ribosomal protein uS8 family. As to quaternary structure, part of the 30S ribosomal subunit. Contacts proteins S5 and S12.

One of the primary rRNA binding proteins, it binds directly to 16S rRNA central domain where it helps coordinate assembly of the platform of the 30S subunit. The protein is Small ribosomal subunit protein uS8 of Phytoplasma australiense.